The following is a 267-amino-acid chain: Cilia- and flagella-associated protein 300 (267 aa).

This sequence belongs to the CFAP300 family. In terms of assembly, interacts with DNAAF2. In terms of tissue distribution, expressed in nasal epithelial cells.

It is found in the cytoplasm. The protein resides in the cytoskeleton. The protein localises to the cilium axoneme. Cilium- and flagellum-specific protein that plays a role in axonemal structure organization and motility. May play a role in outer and inner dynein arm assembly. The sequence is that of Cilia- and flagella-associated protein 300 from Homo sapiens (Human).